The primary structure comprises 335 residues: Ornithine carbamoyltransferase (335 aa).

Residues 57-60 (STRT), Arg108, and 135-138 (HPTQ) contribute to the carbamoyl phosphate site. L-ornithine is bound by residues Asn168, Asp232, and 236–237 (SM). Carbamoyl phosphate-binding positions include 274–275 (CL) and Arg319.

The protein belongs to the aspartate/ornithine carbamoyltransferase superfamily. OTCase family.

The protein resides in the cytoplasm. It carries out the reaction carbamoyl phosphate + L-ornithine = L-citrulline + phosphate + H(+). It participates in amino-acid degradation; L-arginine degradation via ADI pathway; carbamoyl phosphate from L-arginine: step 2/2. Its function is as follows. Reversibly catalyzes the transfer of the carbamoyl group from carbamoyl phosphate (CP) to the N(epsilon) atom of ornithine (ORN) to produce L-citrulline. The chain is Ornithine carbamoyltransferase from Limosilactobacillus reuteri (strain DSM 20016) (Lactobacillus reuteri).